A 1597-amino-acid polypeptide reads, in one-letter code: Glucosyltransferase-I (1597 aa).

Residues 1 to 38 (MEKNERFKMHKVKKRWVTISVASATMLASALGASVASA) form the signal peptide. Residues 52–120 (LTADQTTTNQ…QTTTNANEAK (69 aa)) are disordered. Positions 53–114 (TADQTTTNQD…STDTAAQTTT (62 aa)) are enriched in low complexity. Cell wall-binding repeat units lie at residues 157–176 (MSNV…DGNV) and 178–197 (KNFA…TGAY). The catalytic; approximate stretch occupies residues 200-1050 (TSKVEADKSG…DQASNKYLNV (851 aa)). Cell wall-binding repeat units follow at residues 1089–1108 (TDSF…DGYM), 1109–1128 (VTGA…NGAA), 1130–1150 (RNTV…DGKR), 1152–1172 (ENGY…GVMA), 1173–1191 (LGLT…DGVQ), 1193–1214 (KDKI…NGNA), 1216–1236 (TNTF…DGVA), 1237–1256 (VTGA…NGQQ), 1258–1279 (KGDF…SGDM), 1281–1301 (TNTF…DGAA), 1302–1321 (VTGA…NGQQ), 1323–1343 (KGDI…QTGE), 1344–1365 (QVFN…DGTA), 1366–1380 (QTQA…KDGS), 1415–1434 (LTGA…NGHQ), 1436–1457 (KGQL…SGDQ), 1459–1478 (FNKS…DGTA), 1485–1505 (KGQT…EGQY), 1508–1527 (GSGW…DGKV), 1528–1547 (LTGL…NGIQ), 1549–1570 (KGKA…SGSM), and 1572–1591 (TNQW…DGAA). Positions 1099 to 1597 (LYYFGQDGYM…DGAAVYRGWN (499 aa)) are glucan-binding; approximate.

It belongs to the glycosyl hydrolase 70 family.

The protein resides in the secreted. The enzyme catalyses [(1-&gt;6)-alpha-D-glucosyl](n) + sucrose = [(1-&gt;6)-alpha-D-glucosyl](n+1) + D-fructose. Its function is as follows. Production of extracellular glucans, that are thought to play a key role in the development of the dental plaque because of their ability to adhere to smooth surfaces and mediate the aggregation of bacterial cells and food debris. This chain is Glucosyltransferase-I (gtfI), found in Streptococcus downei (Streptococcus sobrinus).